A 480-amino-acid polypeptide reads, in one-letter code: Cysteine--tRNA ligase (480 aa).

Cys29 is a Zn(2+) binding site. The 'HIGH' region signature appears at 31-41; it reads ITVYDYCHLGH. Residues Cys215, His240, and Glu244 each contribute to the Zn(2+) site. The short motif at 272 to 276 is the 'KMSKS' region element; it reads KMSKS. Lys275 lines the ATP pocket.

The protein belongs to the class-I aminoacyl-tRNA synthetase family. In terms of assembly, monomer. Zn(2+) serves as cofactor.

It is found in the cytoplasm. It carries out the reaction tRNA(Cys) + L-cysteine + ATP = L-cysteinyl-tRNA(Cys) + AMP + diphosphate. This chain is Cysteine--tRNA ligase, found in Microcystis aeruginosa (strain NIES-843 / IAM M-2473).